The following is a 101-amino-acid chain: Ascorbate-specific PTS system EIIB component (101 aa).

A PTS EIIB type-2 domain is found at 1 to 100 (MTVRILAVCG…VIKEHFPQDV (100 aa)). C9 (phosphocysteine intermediate) is an active-site residue. A Phosphocysteine modification is found at C9.

The protein resides in the cytoplasm. The enzyme catalyses N(pros)-phospho-L-histidyl-[protein] + L-ascorbate(out) = L-ascorbate 6-phosphate(in) + L-histidyl-[protein]. In terms of biological role, the phosphoenolpyruvate-dependent sugar phosphotransferase system (sugar PTS), a major carbohydrate active transport system, catalyzes the phosphorylation of incoming sugar substrates concomitantly with their translocation across the cell membrane. The enzyme II UlaABC PTS system is involved in ascorbate transport. This chain is Ascorbate-specific PTS system EIIB component (ulaB), found in Escherichia coli O157:H7.